A 285-amino-acid chain; its full sequence is Probable fructose-bisphosphate aldolase (285 aa).

A D-glyceraldehyde 3-phosphate-binding site is contributed by S50. D85 (proton donor) is an active-site residue. Zn(2+) contacts are provided by H86, D107, E137, and H181. G182 is a binding site for dihydroxyacetone phosphate. H209 lines the Zn(2+) pocket. Residues G210–T212 and N231–T234 contribute to the dihydroxyacetone phosphate site. Phosphothreonine is present on residues T212 and T234.

This sequence belongs to the class II fructose-bisphosphate aldolase family. Zn(2+) serves as cofactor. In terms of processing, phosphorylated during sporulation.

It carries out the reaction beta-D-fructose 1,6-bisphosphate = D-glyceraldehyde 3-phosphate + dihydroxyacetone phosphate. The protein operates within carbohydrate degradation; glycolysis; D-glyceraldehyde 3-phosphate and glycerone phosphate from D-glucose: step 4/4. Its function is as follows. Catalyzes the aldol condensation of dihydroxyacetone phosphate (DHAP or glycerone-phosphate) with glyceraldehyde 3-phosphate (G3P) to form fructose 1,6-bisphosphate (FBP) in gluconeogenesis and the reverse reaction in glycolysis. This chain is Probable fructose-bisphosphate aldolase (fbaA), found in Bacillus subtilis (strain 168).